Reading from the N-terminus, the 177-residue chain is Putative HTH-type transcriptional regulator YvaV (177 aa).

The H-T-H motif DNA-binding region spans 49-73; that stretch reads LTELSEATGMSKTRMSQVVREMLDA.

Belongs to the GbsR family.

This chain is Putative HTH-type transcriptional regulator YvaV (yvaV), found in Bacillus subtilis (strain 168).